The following is a 308-amino-acid chain: MEKNATLLTEFVLTGLSHQPLWNIPLFLVFLVIYLITIVGNVSLITLIWTDPHLHIPMYLFLGSLAFVDTSISSIVVPKMLLNFFGKSKVITLSECMAQFFLFNISATTECFLLAAMAYDRYVAICKPLLYPVVMTNGLCVWLIALSFVAGIIHALIHEGFLLRLTFCNSNMIHNFYCDIISLLKISCTDTSLNYLIVFIFSGSIQVFTISTILVSYTIILFTILKKKSAKGIKKAFSTCGAHLLSVSLYYGPLLFMYVHPASSEVDDQDMIDSLFYTVIIPVLNPIIYSLRNKQVIDSLAKFLKRNV.

The Extracellular segment spans residues 1–27 (MEKNATLLTEFVLTGLSHQPLWNIPLF). The N-linked (GlcNAc...) asparagine glycan is linked to asparagine 4. A helical transmembrane segment spans residues 28-48 (LVFLVIYLITIVGNVSLITLI). The Cytoplasmic segment spans residues 49 to 55 (WTDPHLH). A helical transmembrane segment spans residues 56-76 (IPMYLFLGSLAFVDTSISSIV). The Extracellular portion of the chain corresponds to 77–92 (VPKMLLNFFGKSKVIT). The helical transmembrane segment at 93 to 113 (LSECMAQFFLFNISATTECFL) threads the bilayer. Cysteine 96 and cysteine 188 are disulfide-bonded. At 114–143 (LAAMAYDRYVAICKPLLYPVVMTNGLCVWL) the chain is on the cytoplasmic side. The helical transmembrane segment at 144–164 (IALSFVAGIIHALIHEGFLLR) threads the bilayer. At 165-197 (LTFCNSNMIHNFYCDIISLLKISCTDTSLNYLI) the chain is on the extracellular side. A helical membrane pass occupies residues 198–218 (VFIFSGSIQVFTISTILVSYT). The Cytoplasmic portion of the chain corresponds to 219-238 (IILFTILKKKSAKGIKKAFS). A helical transmembrane segment spans residues 239-259 (TCGAHLLSVSLYYGPLLFMYV). Topologically, residues 260 to 270 (HPASSEVDDQD) are extracellular. A helical membrane pass occupies residues 271 to 291 (MIDSLFYTVIIPVLNPIIYSL). The Cytoplasmic segment spans residues 292–308 (RNKQVIDSLAKFLKRNV).

This sequence belongs to the G-protein coupled receptor 1 family.

It is found in the cell membrane. In terms of biological role, potential odorant receptor. This chain is Olfactory receptor 5H19, found in Mus musculus (Mouse).